Consider the following 128-residue polypeptide: MTRIKRGYIARRRRKKISLFASSFRGAHSRLTRTITQQRIRALVSAHRDRDRKKRDFRRLWITRINAVIRGVGVSYSYSRLIHNLYKKQLLLNRKILAQIAISNRNCLYMISNEIRKEGDRKESNEML.

The protein belongs to the bacterial ribosomal protein bL20 family.

Its subcellular location is the plastid. The protein localises to the chloroplast. Functionally, binds directly to 23S ribosomal RNA and is necessary for the in vitro assembly process of the 50S ribosomal subunit. It is not involved in the protein synthesizing functions of that subunit. This is Large ribosomal subunit protein bL20c from Gossypium barbadense (Sea Island cotton).